Reading from the N-terminus, the 251-residue chain is Ubiquinone/menaquinone biosynthesis C-methyltransferase UbiE (251 aa).

S-adenosyl-L-methionine contacts are provided by residues T74, D95, and 123 to 124 (NA).

This sequence belongs to the class I-like SAM-binding methyltransferase superfamily. MenG/UbiE family.

The catalysed reaction is a 2-demethylmenaquinol + S-adenosyl-L-methionine = a menaquinol + S-adenosyl-L-homocysteine + H(+). The enzyme catalyses a 2-methoxy-6-(all-trans-polyprenyl)benzene-1,4-diol + S-adenosyl-L-methionine = a 5-methoxy-2-methyl-3-(all-trans-polyprenyl)benzene-1,4-diol + S-adenosyl-L-homocysteine + H(+). It functions in the pathway quinol/quinone metabolism; menaquinone biosynthesis; menaquinol from 1,4-dihydroxy-2-naphthoate: step 2/2. The protein operates within cofactor biosynthesis; ubiquinone biosynthesis. Functionally, methyltransferase required for the conversion of demethylmenaquinol (DMKH2) to menaquinol (MKH2) and the conversion of 2-polyprenyl-6-methoxy-1,4-benzoquinol (DDMQH2) to 2-polyprenyl-3-methyl-6-methoxy-1,4-benzoquinol (DMQH2). The polypeptide is Ubiquinone/menaquinone biosynthesis C-methyltransferase UbiE (Shewanella baltica (strain OS223)).